Here is a 297-residue protein sequence, read N- to C-terminus: T-cell leukemia homeobox protein 3 (297 aa).

The segment at 1–68 (MEPAAGAQGP…LGGPRGGAPY (68 aa)) is disordered. Residues 32 to 52 (APPPPPPPPPPPPPPPPPPRG) show a composition bias toward pro residues. A DNA-binding region (homeobox) is located at residues 172 to 231 (RKKPRTSFSRVQICELEKRFHRQKYLASAERAALAKSLKMTDAQVKTWFQNRRTKWRRQT).

Expression is restricted to neurons in the peripheral and central nervous system.

It localises to the nucleus. Seems to be involved in the development of cranial sensory innervation from peripheral ganglia. This Gallus gallus (Chicken) protein is T-cell leukemia homeobox protein 3 (TLX3).